The chain runs to 240 residues: UDP-2,3-diacylglucosamine hydrolase (240 aa).

5 residues coordinate Mn(2+): Asp9, His11, Asp43, Asn81, and His116. 81–82 (NR) provides a ligand contact to substrate. The substrate site is built by Asp124, Ser162, Lys166, Lys169, and His197. Mn(2+) contacts are provided by His197 and His199.

Belongs to the LpxH family. Mn(2+) serves as cofactor.

The protein resides in the cell inner membrane. It catalyses the reaction UDP-2-N,3-O-bis[(3R)-3-hydroxytetradecanoyl]-alpha-D-glucosamine + H2O = 2-N,3-O-bis[(3R)-3-hydroxytetradecanoyl]-alpha-D-glucosaminyl 1-phosphate + UMP + 2 H(+). Its pathway is glycolipid biosynthesis; lipid IV(A) biosynthesis; lipid IV(A) from (3R)-3-hydroxytetradecanoyl-[acyl-carrier-protein] and UDP-N-acetyl-alpha-D-glucosamine: step 4/6. Functionally, hydrolyzes the pyrophosphate bond of UDP-2,3-diacylglucosamine to yield 2,3-diacylglucosamine 1-phosphate (lipid X) and UMP by catalyzing the attack of water at the alpha-P atom. Involved in the biosynthesis of lipid A, a phosphorylated glycolipid that anchors the lipopolysaccharide to the outer membrane of the cell. In Neisseria meningitidis serogroup C / serotype 2a (strain ATCC 700532 / DSM 15464 / FAM18), this protein is UDP-2,3-diacylglucosamine hydrolase.